The chain runs to 53 residues: Sec-independent protein translocase protein TatA (53 aa).

A helical membrane pass occupies residues 1–21; sequence MGMSFSHLLIVLLIIFVLFGA.

It belongs to the TatA/E family. In terms of assembly, the Tat system comprises two distinct complexes: a TatABC complex, containing multiple copies of TatA, TatB and TatC subunits, and a separate TatA complex, containing only TatA subunits. Substrates initially bind to the TatABC complex, which probably triggers association of the separate TatA complex to form the active translocon.

It localises to the cell inner membrane. Functionally, part of the twin-arginine translocation (Tat) system that transports large folded proteins containing a characteristic twin-arginine motif in their signal peptide across membranes. TatA could form the protein-conducting channel of the Tat system. This chain is Sec-independent protein translocase protein TatA, found in Rickettsia africae (strain ESF-5).